The sequence spans 717 residues: Ribosomal RNA large subunit methyltransferase K/L (717 aa).

The region spanning 44 to 155 is the THUMP domain; sequence DAYKVCIYSY…KQFVNVFLCL (112 aa).

It belongs to the methyltransferase superfamily. RlmKL family.

The protein localises to the cytoplasm. The catalysed reaction is guanosine(2445) in 23S rRNA + S-adenosyl-L-methionine = N(2)-methylguanosine(2445) in 23S rRNA + S-adenosyl-L-homocysteine + H(+). It catalyses the reaction guanosine(2069) in 23S rRNA + S-adenosyl-L-methionine = N(2)-methylguanosine(2069) in 23S rRNA + S-adenosyl-L-homocysteine + H(+). Functionally, specifically methylates the guanine in position 2445 (m2G2445) and the guanine in position 2069 (m7G2069) of 23S rRNA. This Francisella tularensis subsp. tularensis (strain WY96-3418) protein is Ribosomal RNA large subunit methyltransferase K/L.